The sequence spans 78 residues: Sec-independent protein translocase protein TatA (78 aa).

A helical membrane pass occupies residues 1-21 (MGGISIWQLLIIAVIVVLLFG). Positions 47 to 59 (ESEKKDADFEPKS) are enriched in basic and acidic residues. The interval 47–78 (ESEKKDADFEPKSLEQQSKQAATESKKDKEQA) is disordered. Residues 60 to 69 (LEQQSKQAAT) show a composition bias toward polar residues.

It belongs to the TatA/E family. In terms of assembly, the Tat system comprises two distinct complexes: a TatABC complex, containing multiple copies of TatA, TatB and TatC subunits, and a separate TatA complex, containing only TatA subunits. Substrates initially bind to the TatABC complex, which probably triggers association of the separate TatA complex to form the active translocon.

The protein resides in the cell inner membrane. Its function is as follows. Part of the twin-arginine translocation (Tat) system that transports large folded proteins containing a characteristic twin-arginine motif in their signal peptide across membranes. TatA could form the protein-conducting channel of the Tat system. This is Sec-independent protein translocase protein TatA from Vibrio vulnificus (strain CMCP6).